The following is a 123-amino-acid chain: Large ribosomal subunit protein eL8 (123 aa).

Belongs to the eukaryotic ribosomal protein eL8 family. In terms of assembly, part of the 50S ribosomal subunit. Probably part of the RNase P complex.

The protein resides in the cytoplasm. Its function is as follows. Multifunctional RNA-binding protein that recognizes the K-turn motif in ribosomal RNA, the RNA component of RNase P, box H/ACA, box C/D and box C'/D' sRNAs. This chain is Large ribosomal subunit protein eL8, found in Pyrococcus abyssi (strain GE5 / Orsay).